A 319-amino-acid polypeptide reads, in one-letter code: Lambda-crystallin homolog (319 aa).

Alanine 2 is modified (N-acetylalanine). Serine 3 is modified (phosphoserine). NAD(+)-binding positions include 16-17 (LI), aspartate 36, glutamate 97, and lysine 102.

Belongs to the 3-hydroxyacyl-CoA dehydrogenase family. Homodimer. In terms of tissue distribution, widely expressed, with highest levels in liver. Undetectable in skeletal muscle.

The protein localises to the cytoplasm. It catalyses the reaction L-gulonate + NAD(+) = 3-dehydro-L-gulonate + NADH + H(+). Inhibited by malonate. In terms of biological role, has high L-gulonate 3-dehydrogenase activity. It also exhibits low dehydrogenase activity toward L-3-hydroxybutyrate (HBA) and L-threonate. The protein is Lambda-crystallin homolog (Cryl1) of Mus musculus (Mouse).